A 246-amino-acid polypeptide reads, in one-letter code: 14-3-3 protein beta/alpha (246 aa).

Position 1 is an N-acetylmethionine; in 14-3-3 protein beta/alpha; alternate (M1). Residue M1 is modified to N-acetylmethionine. Position 2 is an N-acetylthreonine; in 14-3-3 protein beta/alpha, N-terminally processed (T2). At T2 the chain carries Phosphothreonine. K5 bears the N6-acetyllysine mark. K51 carries the N6-acetyllysine; alternate modification. Residue K51 forms a Glycyl lysine isopeptide (Lys-Gly) (interchain with G-Cter in SUMO2); alternate linkage. Phosphoserine is present on S60. K70 carries the post-translational modification N6-acetyllysine. A 3'-nitrotyrosine mark is found at Y84 and Y106. K117 is modified (N6-acetyllysine). Phosphoserine is present on residues S186 and S232.

It belongs to the 14-3-3 family. Homodimer. Interacts with SAMSN1 and PRKCE. Interacts with AKAP13. Interacts with SSH1 and TORC2/CRTC2. Interacts with ABL1; the interaction results in cytoplasmic location of ABL1 and inhibition of cABL-mediated apoptosis. Interacts with ROR2 (dimer); the interaction results in phosphorylation of YWHAB on tyrosine residues. Interacts with GAB2. Interacts with YAP1 (phosphorylated form). Interacts with the phosphorylated (by AKT1) form of SRPK2. Interacts with PKA-phosphorylated AANAT. Interacts with MYO1C. Interacts with SIRT2. Interacts with the 'Thr-369' phosphorylated form of DAPK2. Interacts with PI4KB, TBC1D22A and TBC1D22B. Interacts with the 'Ser-1134' and 'Ser-1161' phosphorylated form of SOS1. Interacts (via phosphorylated form) with YWHAB; this interaction occurs in a protein kinase AKT1-dependent manner. Interacts with SLITRK1. Interacts with SYNPO2 (phosphorylated form); YWHAB competes with ACTN2 for interaction with SYNPO2. Interacts with RIPOR2 (via phosphorylated form) isoform 2; this interaction occurs in a chemokine-dependent manner and does not compete for binding of RIPOR2 with RHOA nor blocks inhibition of RIPOR2-mediated RHOA activity. Interacts with MARK2 and MARK3. Interacts with TESK1; the interaction is dependent on the phosphorylation of TESK1 'Ser-437' and inhibits TESK1 kinase activity. Interacts with MEFV. Interacts with HDAC4. Interacts with ADAM22 (via C-terminus). As to quaternary structure, (Microbial infection) Interacts with herpes simplex virus 1 protein UL46. In terms of assembly, (Microbial infection) Probably interacts with Chlamydia trachomatis protein IncG. Post-translationally, the alpha, brain-specific form differs from the beta form in being phosphorylated. Phosphorylated on Ser-60 by protein kinase C delta type catalytic subunit in a sphingosine-dependent fashion.

The protein localises to the cytoplasm. The protein resides in the melanosome. It localises to the vacuole membrane. Adapter protein implicated in the regulation of a large spectrum of both general and specialized signaling pathways. Binds to a large number of partners, usually by recognition of a phosphoserine or phosphothreonine motif. Binding generally results in the modulation of the activity of the binding partner. Negative regulator of osteogenesis. Blocks the nuclear translocation of the phosphorylated form (by AKT1) of SRPK2 and antagonizes its stimulatory effect on cyclin D1 expression resulting in blockage of neuronal apoptosis elicited by SRPK2. Negative regulator of signaling cascades that mediate activation of MAP kinases via AKAP13. The sequence is that of 14-3-3 protein beta/alpha (YWHAB) from Homo sapiens (Human).